We begin with the raw amino-acid sequence, 407 residues long: Phosphopentomutase (407 aa).

Mn(2+)-binding residues include aspartate 10, aspartate 307, histidine 312, aspartate 348, histidine 349, and histidine 360.

It belongs to the phosphopentomutase family. The cofactor is Mn(2+).

Its subcellular location is the cytoplasm. The enzyme catalyses 2-deoxy-alpha-D-ribose 1-phosphate = 2-deoxy-D-ribose 5-phosphate. It catalyses the reaction alpha-D-ribose 1-phosphate = D-ribose 5-phosphate. It functions in the pathway carbohydrate degradation; 2-deoxy-D-ribose 1-phosphate degradation; D-glyceraldehyde 3-phosphate and acetaldehyde from 2-deoxy-alpha-D-ribose 1-phosphate: step 1/2. Its function is as follows. Isomerase that catalyzes the conversion of deoxy-ribose 1-phosphate (dRib-1-P) and ribose 1-phosphate (Rib-1-P) to deoxy-ribose 5-phosphate (dRib-5-P) and ribose 5-phosphate (Rib-5-P), respectively. This is Phosphopentomutase from Methylobacterium nodulans (strain LMG 21967 / CNCM I-2342 / ORS 2060).